The sequence spans 735 residues: MSRRFRLGDIRSTGVAEYASTPVRADASPTTNPPPTAAPASLTSTDSHTMAPPNQLTFDLSGVIFTGSPPAWLLQYRGFEKHMVTMLMLKSGVRTYPRFDDFISALVSTMALMGIVPQTSLTDGEVILMRYANAETLPEPEETTRQWGDSPEAELANEGYGNDEIDNTPQLQAPLISGPPQTYAAAAAPPSLQQSTVPLISATPSPALSRSSSVASLTSIPACSPAPSSLPSILTMQTRPPSPSSKSHQPRVTLPERRPTRRPEHIANDEDYNRSRAGYAQGKPSHSPMYGSGRESHFEEAFFAAYPHSVDGRWHKFSASIVVLADPNEDPALLTLHSLEREEGAQETYIMRTSAAFAVARVRVMRLRPTMSVHDVHDMLAGHPVVSITGRACAYMVRHKLTDGVFSKQFRRIVMGIDPVMIRHGTQALSLFAILTDHRLDHAHTHAAMSLRLAMQFVESPLYDAQRSWLKAHAPATIHCAATSDSNADSTLSAIYRSDSTPRDQPTPGDSTISQLTASNQELQIQITALTTTNNIQARAIAELKACVRPHSTDTHHALSKYALAHTCINTQELPLLTSLLGEDTATAIQTARERAKDIAKRTLTERVAEPLRVMNASLEAELTHERAHSSELRATLAILETDLNTAARERDAHAHMITSLQSEITELRQERLTVITSERTDVALLEQRVTDAERHAVAQHQSLPLLYGSVSLELPPSPTEDELLTSVAPADLWD.

3 disordered regions span residues 18–50, 138–170, and 218–290; these read YASTPVRADASPTTNPPPTAAPASLTSTDSHTM, PEPEETTRQWGDSPEAELANEGYGNDEIDNTPQ, and TSIP…SPMY. Over residues 38 to 47 the composition is skewed to low complexity; that stretch reads APASLTSTDS. A compositionally biased stretch (low complexity) spans 218–234; that stretch reads TSIPACSPAPSSLPSIL. Positions 235 to 247 are enriched in polar residues; it reads TMQTRPPSPSSKS. The span at 254 to 274 shows a compositional bias: basic and acidic residues; the sequence is LPERRPTRRPEHIANDEDYNR.

It belongs to the aquareoviridae NS1 protein family.

Functionally, non-structural protein with ssRNA-binding activity. Is probably involved in the formation of viral inclusions, where the assembly of cores and the replication of viral RNA are thought to occur. In Ctenopharyngodon idella (Grass carp), this protein is Non-structural protein 1 (S4).